Reading from the N-terminus, the 441-residue chain is Trigger factor (441 aa).

In terms of domain architecture, PPIase FKBP-type spans 175–257 (GDFISLSLHV…VNAVIEVVAP (83 aa)).

This sequence belongs to the FKBP-type PPIase family. Tig subfamily.

The protein localises to the cytoplasm. The enzyme catalyses [protein]-peptidylproline (omega=180) = [protein]-peptidylproline (omega=0). Functionally, involved in protein export. Acts as a chaperone by maintaining the newly synthesized protein in an open conformation. Functions as a peptidyl-prolyl cis-trans isomerase. The chain is Trigger factor from Chlamydia abortus (strain DSM 27085 / S26/3) (Chlamydophila abortus).